We begin with the raw amino-acid sequence, 356 residues long: Guanine nucleotide-binding protein alpha-2 subunit (356 aa).

Gly-2 carries the N-myristoyl glycine lipid modification. Cys-4 carries S-palmitoyl cysteine lipidation. The G-alpha domain maps to 32 to 356 (RTVKLLLLGA…QSNLHKSGLY (325 aa)). Positions 35-48 (KLLLLGAGECGKST) are G1 motif. GTP is bound by residues Glu-43, Gly-45, Lys-46, Ser-47, Thr-48, Asp-153, Leu-178, Thr-184, Gly-206, Asn-272, Lys-273, Asp-275, and Ala-328. Ser-47 provides a ligand contact to Mg(2+). The G2 motif stretch occupies residues 176–184 (DTLLLRTKT). Thr-184 contacts Mg(2+). The tract at residues 199-208 (FRVFDVGGQR) is G3 motif. Residues 268–275 (ILFLNKKD) are G4 motif. Residues 326–331 (TCATDT) form a G5 motif region.

It belongs to the G-alpha family. G(q) subfamily. G proteins are composed of 3 units; alpha, beta and gamma. The alpha chain contains the guanine nucleotide binding site. Mg(2+) serves as cofactor.

Functionally, guanine nucleotide-binding proteins (G proteins) are involved as modulators or transducers in various transmembrane signaling systems. Involved in behavioral responses to P.aeruginosa by controlling the expression of daf-7, a member of the TGF-beta family, in ASJ sensory neurons. The chain is Guanine nucleotide-binding protein alpha-2 subunit (gpa-2) from Caenorhabditis elegans.